The chain runs to 506 residues: Cobyric acid synthase (506 aa).

Positions 251–448 (DITIAIVQLP…LHGLFDSDAF (198 aa)) constitute a GATase cobBQ-type domain. Cysteine 332 acts as the Nucleophile in catalysis. The active site involves histidine 440.

It belongs to the CobB/CobQ family. CobQ subfamily.

Its pathway is cofactor biosynthesis; adenosylcobalamin biosynthesis. In terms of biological role, catalyzes amidations at positions B, D, E, and G on adenosylcobyrinic A,C-diamide. NH(2) groups are provided by glutamine, and one molecule of ATP is hydrogenolyzed for each amidation. The chain is Cobyric acid synthase from Salmonella heidelberg (strain SL476).